A 252-amino-acid polypeptide reads, in one-letter code: Type III pantothenate kinase (252 aa).

6-13 contacts ATP; it reads DMGNTRLK. Substrate contacts are provided by residues tyrosine 93 and 100 to 103; that span reads GVDR. The active-site Proton acceptor is the aspartate 102. An ATP-binding site is contributed by threonine 126. Threonine 179 contacts substrate.

Belongs to the type III pantothenate kinase family. Homodimer. NH4(+) is required as a cofactor. K(+) serves as cofactor.

The protein localises to the cytoplasm. The catalysed reaction is (R)-pantothenate + ATP = (R)-4'-phosphopantothenate + ADP + H(+). Its pathway is cofactor biosynthesis; coenzyme A biosynthesis; CoA from (R)-pantothenate: step 1/5. In terms of biological role, catalyzes the phosphorylation of pantothenate (Pan), the first step in CoA biosynthesis. This chain is Type III pantothenate kinase, found in Cellvibrio japonicus (strain Ueda107) (Pseudomonas fluorescens subsp. cellulosa).